The following is a 218-amino-acid chain: ATP phosphoribosyltransferase (218 aa).

The protein belongs to the ATP phosphoribosyltransferase family. Short subfamily. Heteromultimer composed of HisG and HisZ subunits.

The protein localises to the cytoplasm. It carries out the reaction 1-(5-phospho-beta-D-ribosyl)-ATP + diphosphate = 5-phospho-alpha-D-ribose 1-diphosphate + ATP. The protein operates within amino-acid biosynthesis; L-histidine biosynthesis; L-histidine from 5-phospho-alpha-D-ribose 1-diphosphate: step 1/9. Its function is as follows. Catalyzes the condensation of ATP and 5-phosphoribose 1-diphosphate to form N'-(5'-phosphoribosyl)-ATP (PR-ATP). Has a crucial role in the pathway because the rate of histidine biosynthesis seems to be controlled primarily by regulation of HisG enzymatic activity. The chain is ATP phosphoribosyltransferase from Synechococcus elongatus (strain ATCC 33912 / PCC 7942 / FACHB-805) (Anacystis nidulans R2).